The following is a 323-amino-acid chain: o-succinylbenzoate synthase (323 aa).

K134 acts as the Proton donor in catalysis. The Mg(2+) site is built by D162, E191, and D214. Catalysis depends on K236, which acts as the Proton acceptor.

Belongs to the mandelate racemase/muconate lactonizing enzyme family. MenC type 1 subfamily. It depends on a divalent metal cation as a cofactor.

It catalyses the reaction (1R,6R)-6-hydroxy-2-succinyl-cyclohexa-2,4-diene-1-carboxylate = 2-succinylbenzoate + H2O. The protein operates within quinol/quinone metabolism; 1,4-dihydroxy-2-naphthoate biosynthesis; 1,4-dihydroxy-2-naphthoate from chorismate: step 4/7. Its pathway is quinol/quinone metabolism; menaquinone biosynthesis. In terms of biological role, converts 2-succinyl-6-hydroxy-2,4-cyclohexadiene-1-carboxylate (SHCHC) to 2-succinylbenzoate (OSB). The sequence is that of o-succinylbenzoate synthase from Yersinia pseudotuberculosis serotype O:1b (strain IP 31758).